A 435-amino-acid chain; its full sequence is Serine--tRNA ligase (435 aa).

Residue 233-235 (TAE) coordinates L-serine. 264-266 (RAE) provides a ligand contact to ATP. Glu-287 is an L-serine binding site. Residue 351 to 354 (EISS) coordinates ATP. Ser-386 serves as a coordination point for L-serine.

The protein belongs to the class-II aminoacyl-tRNA synthetase family. Type-1 seryl-tRNA synthetase subfamily. In terms of assembly, homodimer. The tRNA molecule binds across the dimer.

The protein resides in the cytoplasm. The enzyme catalyses tRNA(Ser) + L-serine + ATP = L-seryl-tRNA(Ser) + AMP + diphosphate + H(+). It catalyses the reaction tRNA(Sec) + L-serine + ATP = L-seryl-tRNA(Sec) + AMP + diphosphate + H(+). Its pathway is aminoacyl-tRNA biosynthesis; selenocysteinyl-tRNA(Sec) biosynthesis; L-seryl-tRNA(Sec) from L-serine and tRNA(Sec): step 1/1. Its function is as follows. Catalyzes the attachment of serine to tRNA(Ser). Is also able to aminoacylate tRNA(Sec) with serine, to form the misacylated tRNA L-seryl-tRNA(Sec), which will be further converted into selenocysteinyl-tRNA(Sec). This Anaeromyxobacter sp. (strain K) protein is Serine--tRNA ligase.